We begin with the raw amino-acid sequence, 196 residues long: MARADKATAVADIAEQFKEATATLITEYRGLTVANLAELRRSLSGAATYSVAKNTLVKRAASEAGIEGLDELFAGPTAIAFVTGEPVDAAKAIKTFAKEHKALVIKGGYMDGRALSVAEVERIADLESREVLLAKLAGAMKGNLAKAAGLFNAPASQVARLAAALQEKKAAEGPAEAPQPATEPPAEAPEAPADAE.

The interval 167 to 196 is disordered; the sequence is EKKAAEGPAEAPQPATEPPAEAPEAPADAE.

It belongs to the universal ribosomal protein uL10 family. As to quaternary structure, part of the ribosomal stalk of the 50S ribosomal subunit. The N-terminus interacts with L11 and the large rRNA to form the base of the stalk. The C-terminus forms an elongated spine to which L12 dimers bind in a sequential fashion forming a multimeric L10(L12)X complex.

Functionally, forms part of the ribosomal stalk, playing a central role in the interaction of the ribosome with GTP-bound translation factors. This Mycolicibacterium paratuberculosis (strain ATCC BAA-968 / K-10) (Mycobacterium paratuberculosis) protein is Large ribosomal subunit protein uL10.